The primary structure comprises 84 residues: ATP synthase subunit c (84 aa).

Transmembrane regions (helical) follow at residues 10-30 (IAVA…FAIL) and 53-73 (FIVA…ALFF).

Belongs to the ATPase C chain family. F-type ATPases have 2 components, F(1) - the catalytic core - and F(0) - the membrane proton channel. F(1) has five subunits: alpha(3), beta(3), gamma(1), delta(1), epsilon(1). F(0) has three main subunits: a(1), b(2) and c(10-14). The alpha and beta chains form an alternating ring which encloses part of the gamma chain. F(1) is attached to F(0) by a central stalk formed by the gamma and epsilon chains, while a peripheral stalk is formed by the delta and b chains.

It is found in the cell inner membrane. F(1)F(0) ATP synthase produces ATP from ADP in the presence of a proton or sodium gradient. F-type ATPases consist of two structural domains, F(1) containing the extramembraneous catalytic core and F(0) containing the membrane proton channel, linked together by a central stalk and a peripheral stalk. During catalysis, ATP synthesis in the catalytic domain of F(1) is coupled via a rotary mechanism of the central stalk subunits to proton translocation. In terms of biological role, key component of the F(0) channel; it plays a direct role in translocation across the membrane. A homomeric c-ring of between 10-14 subunits forms the central stalk rotor element with the F(1) delta and epsilon subunits. The polypeptide is ATP synthase subunit c (Shewanella putrefaciens (strain CN-32 / ATCC BAA-453)).